The following is a 509-amino-acid chain: 3-ketoacyl-CoA synthase 11 (509 aa).

The next 2 helical transmembrane spans lie at 36-56 (LITH…AAQI) and 75-95 (LISV…YFMT). Positions 92–381 (YFMTRPRPVY…FFATLVGRKL (290 aa)) constitute an FAE domain. Catalysis depends on residues Cys-236, His-315, His-399, His-403, and Asn-436.

The protein belongs to the thiolase-like superfamily. Chalcone/stilbene synthases family. As to expression, only expressed in guard cells. Expressed in siliques, flowers, leaves, stems, roots and seedlings.

It localises to the membrane. The enzyme catalyses a very-long-chain acyl-CoA + malonyl-CoA + H(+) = a very-long-chain 3-oxoacyl-CoA + CO2 + CoA. It participates in lipid metabolism; fatty acid biosynthesis. Functionally, active on both saturated and mono-unsaturated acyl chains C16 to C20. The polypeptide is 3-ketoacyl-CoA synthase 11 (Arabidopsis thaliana (Mouse-ear cress)).